The chain runs to 119 residues: Ig heavy chain V region T601 (119 aa).

Residues 1–112 (EVKLLESGGG…GYFDVWGAGT (112 aa)) enclose the Ig-like domain.

The sequence is that of Ig heavy chain V region T601 from Mus musculus (Mouse).